The primary structure comprises 1556 residues: Bromodomain adjacent to zinc finger domain protein 1A (1556 aa).

Positions 1 to 128 (MPLLHRKPFV…EETVEVIRNN (128 aa)) are required for interaction with the CHRAC1-POLE3 heterodimer. Required for interaction with the CHRAC1-POLE3 heterodimer. The required for interaction with NCOR1 stretch occupies residues 1–133 (MPLLHRKPFV…VIRNNGARLQ (133 aa)). A WAC domain is found at 22-128 (EEVFYCKVTN…EETVEVIRNN (107 aa)). S270 is subject to Phosphoserine. The stretch at 306 to 397 (KERDKLLKQE…YVEYLKQWSK (92 aa)) forms a coiled coil. One can recognise a DDT domain in the interval 422 to 487 (PEIFGDALMV…LTAIFQAIAE (66 aa)). The stretch at 634–709 (IEDYVDILRQ…DISIGEEERE (76 aa)) forms a coiled coil. Basic and acidic residues predominate over residues 662-695 (EAAARIRKRKEEKLKEQEQKMKEKQEKLKEDEQR). Disordered regions lie at residues 662 to 754 (EAAA…NGFK), 841 to 877 (PSSF…GPRD), and 941 to 966 (FHFS…AYDP). The tract at residues 667 to 933 (IRKRKEEKLK…QEKSRICAQL (267 aa)) is required for interaction with SMARCA5 and formation of the CHRAC ISWI chromatin remodeling complex. Phosphoserine is present on S702. Acidic residues predominate over residues 703 to 713 (IGEEEREDFDT). The span at 715 to 726 (IESKDTEQKELD) shows a compositional bias: basic and acidic residues. A compositionally biased stretch (acidic residues) spans 727-736 (QDMVTEDEDD). At T731 the chain carries Phosphothreonine. 2 stretches are compositionally biased toward polar residues: residues 842 to 872 (SSFQ…SNID) and 951 to 965 (SKPT…NAYD). A Glycyl lysine isopeptide (Lys-Gly) (interchain with G-Cter in SUMO2) cross-link involves residue K952. Phosphoserine occurs at positions 960 and 961. The segment at 1148-1198 (NARCKICRKKGDAENMVLCDGCDRGHHTYCVRPKLKTVPEGDWFCPECRPK) adopts a PHD-type zinc-finger fold. 2 disordered regions span residues 1202–1376 (RRLS…NFPN) and 1399–1431 (LQES…RQGG). A compositionally biased stretch (acidic residues) spans 1213 to 1258 (ESDEDVEDSMGGEDDEVDGDEEEGQSEEEEYEVEQDEDDSQEEEEV). Positions 1262–1276 (KRGRPQVRLPVKTRG) are enriched in basic residues. A compositionally biased stretch (polar residues) spans 1277–1312 (KLSSSFSSRGQQQEPGRYPSRSQQSTPKTTVSSKTG). S1281, S1320, S1339, S1353, S1363, S1371, S1402, S1413, and S1417 each carry phosphoserine. The segment covering 1363 to 1374 (SANNTPENSPNF) has biased composition (polar residues). Positions 1430-1533 (GGVHELSAFE…AFFHIQAQKL (104 aa)) constitute a Bromo domain. T1547 bears the Phosphothreonine mark.

This sequence belongs to the WAL family. In terms of assembly, component of the ACF-1 ISWI chromatin remodeling complex at least composed of SMARCA1 and BAZ1A, which regulates the spacing of histone octamers on the DNA template to facilitate access to DNA. Within the ACF-1 ISWI chromatin remodeling complex interacts with SMARCA1; the interaction is direct. Component of the ACF-5 ISWI chromatin remodeling complex (also called the ACF complex) at least composed of BAZ1A and SMARCA5/SNF2H, which regulates the spacing of histone octamers on the DNA template to facilitate access to DNA. Within the ACF-5 ISWI chromatin remodeling complex interacts with SMARCA5/SNF2H; the interaction is direct. Component of the CHRAC ISWI chromatin remodeling complex at least composed of SMARCA5/SNF2H, BAZ1A/ACF1, CHRAC1 and POLE3; the complex preferentially binds DNA through the CHRAC1-POLE3 heterodimer and possesses ATP-dependent nucleosome-remodeling activity. Within the complex interacts (via N-terminus) with POLE3-CHRAC1 heterodimer; the interaction is direct and is required for the complex to preferentially bind to DNA. Within the complex interacts with SMARCA5/SNF2H; the interaction is direct and promotes the interaction with the POLE3-CHRAC1 heterodimer. Interacts with NCOR1 (via its RD1 domain); the interaction corepresses a number of NCOR1-regulated genes. As to expression, highly expressed in testis and at low or undetectable levels in other tissues analyzed.

It is found in the nucleus. Functionally, regulatory subunit of the ATP-dependent ACF-1 and ACF-5 ISWI chromatin remodeling complexes, which form ordered nucleosome arrays on chromatin and slide edge- and center-positioned histone octamers away from their original location on the DNA template to facilitate access to DNA during DNA-templated processes such as DNA replication, transcription, and repair. Both complexes regulate the spacing of nucleosomes along the chromatin and have the ability to slide mononucleosomes to the center of a DNA template in an ATP-dependent manner. The ACF-1 ISWI chromatin remodeling complex has a lower ATP hydrolysis rate than the ACF-5 ISWI chromatin remodeling complex. Has a role in sensing the length of DNA which flank nucleosomes, which modulates the nucleosome spacing activity of the ACF-5 ISWI chromatin remodeling complex. Involved in DNA replication and together with SMARCA5/SNF2H is required for replication of pericentric heterochromatin in S-phase. May have a role in nuclear receptor-mediated transcription repression. The protein is Bromodomain adjacent to zinc finger domain protein 1A (BAZ1A) of Homo sapiens (Human).